A 140-amino-acid polypeptide reads, in one-letter code: Myelodysplastic syndrome 2 translocation-associated protein (140 aa).

In terms of tissue distribution, highly expressed in peripheral blood leukocytes, spleen, thymus, kidney, pancreas and lung.

This chain is Myelodysplastic syndrome 2 translocation-associated protein (MDS2), found in Homo sapiens (Human).